The chain runs to 263 residues: Calpain small subunit 1 (263 aa).

M1 bears the N-acetylmethionine mark. S6 is subject to Phosphoserine. The EF-hand 1; atypical domain maps to 91–125; sequence EEVRQFRRLFAQLAGDDMEVSATELMNILNKVVTR. Ca(2+)-binding residues include A104, D107, E109, E114, D132, D147, D149, T151, K153, and E158. EF-hand domains are found at residues 134–167, 164–199, 200–228, and 229–263; these read FGID…NNIK, NNIK…AGFR, LNEH…ISCL, and VRLD…TMYS. At K174 the chain carries N6-acetyllysine. Ca(2+) is bound by residues D177, D179, S181, T183, E188, and D220.

Homodimer or heterodimer of a large (catalytic) and a small (regulatory) subunit. In presence of calcium, the heterodimer dissociates.

It localises to the cytoplasm. Its subcellular location is the cell membrane. Its function is as follows. Regulatory subunit of the calcium-regulated non-lysosomal thiol-protease which catalyzes limited proteolysis of substrates involved in cytoskeletal remodeling and signal transduction. Essential for embryonic development. The chain is Calpain small subunit 1 (CAPNS1) from Bos taurus (Bovine).